Reading from the N-terminus, the 312-residue chain is MPNSHSTQSTPVKNFQNKFLVLTSTPKDFLLLMKPSVMLLAVFTAITGLFIAPNKIHPLLSSIAILCISTGAGAAGAINMWYDADIDSIMKRTRNRPTVTGKIPPSTALTFGIILAFFSVLVMAICVNYISSILLLISISFYIIVYTMWLKRRTAQNIVIGGAAGALPPVIGYSAVTNSIDTTCLMLFLIIFLWTPAHFWTLSLYYTNDYKLANVPILPLVKGINYTKYSILAYTFLTVISASLPYFTDIAGLLYLICSTISGIIFLCYASMLFNDRNNILARKMFKYSIIYLFNIFLYLIIEHCIKHFNIS.

9 helical membrane-spanning segments follow: residues 31 to 51 (LLMK…GLFI), 58 to 78 (PLLS…AGAI), 107 to 127 (TALT…AICV), 130 to 150 (ISSI…TMWL), 157 to 177 (NIVI…SAVT), 184 to 204 (CLML…TLSL), 229 to 249 (YSIL…YFTD), 250 to 270 (IAGL…LCYA), and 286 to 306 (FKYS…EHCI).

This sequence belongs to the UbiA prenyltransferase family. Protoheme IX farnesyltransferase subfamily.

It is found in the cell inner membrane. It carries out the reaction heme b + (2E,6E)-farnesyl diphosphate + H2O = Fe(II)-heme o + diphosphate. Its pathway is porphyrin-containing compound metabolism; heme O biosynthesis; heme O from protoheme: step 1/1. Converts heme B (protoheme IX) to heme O by substitution of the vinyl group on carbon 2 of heme B porphyrin ring with a hydroxyethyl farnesyl side group. This chain is Protoheme IX farnesyltransferase, found in Orientia tsutsugamushi (strain Ikeda) (Rickettsia tsutsugamushi).